Consider the following 252-residue polypeptide: Small ribosomal subunit protein eS1A (252 aa).

An N-acetylalanine; partial modification is found at alanine 2.

This sequence belongs to the eukaryotic ribosomal protein eS1 family. In terms of assembly, component of the small ribosomal subunit (SSU). Mature yeast ribosomes consist of a small (40S) and a large (60S) subunit. The 40S small subunit contains 1 molecule of ribosomal RNA (18S rRNA) and at least 33 different proteins. The large 60S subunit contains 3 rRNA molecules (25S, 5.8S and 5S rRNA) and at least 46 different proteins. eS1 interacts directly with uS11 and eS26, which form part of the mRNA exit tunnel.

The protein resides in the cytoplasm. In terms of biological role, component of the ribosome, a large ribonucleoprotein complex responsible for the synthesis of proteins in the cell. The small ribosomal subunit (SSU) binds messenger RNAs (mRNAs) and translates the encoded message by selecting cognate aminoacyl-transfer RNA (tRNA) molecules. The large subunit (LSU) contains the ribosomal catalytic site termed the peptidyl transferase center (PTC), which catalyzes the formation of peptide bonds, thereby polymerizing the amino acids delivered by tRNAs into a polypeptide chain. The nascent polypeptides leave the ribosome through a tunnel in the LSU and interact with protein factors that function in enzymatic processing, targeting, and the membrane insertion of nascent chains at the exit of the ribosomal tunnel. In Schizosaccharomyces pombe (strain 972 / ATCC 24843) (Fission yeast), this protein is Small ribosomal subunit protein eS1A (rps101).